A 435-amino-acid chain; its full sequence is Aspartate--tRNA(Asp/Asn) ligase (435 aa).

E163 lines the L-aspartate pocket. An aspartate region spans residues 185-188 (QLYK). Residue R206 coordinates L-aspartate. ATP is bound by residues 206–208 (RAE), 214–216 (RHL), and E358. L-aspartate-binding residues include S361 and R365. Position 406–409 (406–409 (GAER)) interacts with ATP.

It belongs to the class-II aminoacyl-tRNA synthetase family. Type 2 subfamily. In terms of assembly, homodimer.

Its subcellular location is the cytoplasm. It carries out the reaction tRNA(Asx) + L-aspartate + ATP = L-aspartyl-tRNA(Asx) + AMP + diphosphate. In terms of biological role, aspartyl-tRNA synthetase with relaxed tRNA specificity since it is able to aspartylate not only its cognate tRNA(Asp) but also tRNA(Asn). Reaction proceeds in two steps: L-aspartate is first activated by ATP to form Asp-AMP and then transferred to the acceptor end of tRNA(Asp/Asn). Is slightly more efficient at aminoacylating tRNA(Asn) over tRNA(Asp). This chain is Aspartate--tRNA(Asp/Asn) ligase (aspS2), found in Deinococcus radiodurans (strain ATCC 13939 / DSM 20539 / JCM 16871 / CCUG 27074 / LMG 4051 / NBRC 15346 / NCIMB 9279 / VKM B-1422 / R1).